The primary structure comprises 150 residues: Large ribosomal subunit protein uL13 (150 aa).

It belongs to the universal ribosomal protein uL13 family. Part of the 50S ribosomal subunit.

In terms of biological role, this protein is one of the early assembly proteins of the 50S ribosomal subunit, although it is not seen to bind rRNA by itself. It is important during the early stages of 50S assembly. In Chlamydia trachomatis serovar A (strain ATCC VR-571B / DSM 19440 / HAR-13), this protein is Large ribosomal subunit protein uL13.